The following is a 367-amino-acid chain: Alanine racemase (367 aa).

The active-site Proton acceptor; specific for D-alanine is Lys-40. N6-(pyridoxal phosphate)lysine is present on Lys-40. Arg-136 serves as a coordination point for substrate. Tyr-263 acts as the Proton acceptor; specific for L-alanine in catalysis. Met-310 contacts substrate.

This sequence belongs to the alanine racemase family. Pyridoxal 5'-phosphate serves as cofactor.

The catalysed reaction is L-alanine = D-alanine. It participates in amino-acid biosynthesis; D-alanine biosynthesis; D-alanine from L-alanine: step 1/1. In terms of biological role, catalyzes the interconversion of L-alanine and D-alanine. May also act on other amino acids. The sequence is that of Alanine racemase (alr) from Lactococcus lactis subsp. cremoris (strain SK11).